Consider the following 84-residue polypeptide: Small ribosomal subunit protein bS20 (84 aa).

A disordered region spans residues 1–28 (MPNIKSAIKRVKTAETRNSRNASQRSAM).

This sequence belongs to the bacterial ribosomal protein bS20 family.

Binds directly to 16S ribosomal RNA. This is Small ribosomal subunit protein bS20 from Listeria monocytogenes serotype 4b (strain CLIP80459).